The following is a 447-amino-acid chain: N-succinylarginine dihydrolase (447 aa).

Substrate-binding positions include alanine 19 to serine 28, asparagine 110, and histidine 137 to arginine 138. Glutamate 174 is an active-site residue. Residue arginine 212 coordinates substrate. Histidine 248 is an active-site residue. Substrate-binding residues include aspartate 250 and asparagine 359. Residue cysteine 365 is the Nucleophile of the active site.

This sequence belongs to the succinylarginine dihydrolase family. As to quaternary structure, homodimer.

The enzyme catalyses N(2)-succinyl-L-arginine + 2 H2O + 2 H(+) = N(2)-succinyl-L-ornithine + 2 NH4(+) + CO2. The protein operates within amino-acid degradation; L-arginine degradation via AST pathway; L-glutamate and succinate from L-arginine: step 2/5. In terms of biological role, catalyzes the hydrolysis of N(2)-succinylarginine into N(2)-succinylornithine, ammonia and CO(2). The protein is N-succinylarginine dihydrolase of Escherichia coli (strain SMS-3-5 / SECEC).